A 500-amino-acid polypeptide reads, in one-letter code: Transcription factor-like 5 protein (500 aa).

Pro residues-rich tracts occupy residues 1 to 12 (MSGPGPREPPPE) and 196 to 210 (AEPP…PPEP). Disordered regions lie at residues 1 to 34 (MSGP…ALGE) and 191 to 211 (FNSI…PEPG). An R3 epitope (recognized by Chagas's antibodies) region spans residues 347-356 (MRQLDTNVER). Positions 365-410 (VGEGATATQGAWQSSESSQANLGEQAQSGPQGGRSQRRERHNRMER) are disordered. Residues 370–393 (TATQGAWQSSESSQANLGEQAQSG) are compositionally biased toward polar residues. A bHLH domain is found at 400-450 (QRRERHNRMERDRRRRIRICCDELNLLVPFCNAETDKATTLQWTTAFLKYI). Positions 481 to 500 (SLVTCPAQGSLQSSPSMEIK) are R1 epitope (recognized by Chagas's antibodies).

As to quaternary structure, efficient DNA binding requires dimerization with another bHLH protein. As to expression, isoform 3 is testis specific. Isoform 2 is pancreas specific.

Its subcellular location is the nucleus. Functionally, putative transcription factor. Isoform 3 may play a role in early spermatogenesis. This Homo sapiens (Human) protein is Transcription factor-like 5 protein (TCFL5).